The sequence spans 310 residues: L-lactate dehydrogenase (310 aa).

Residues Val11, Asp32, Tyr62, and Gly76–Val77 each bind NAD(+). Substrate is bound by residues Gln79, Arg85, and Asn117–Asp120. NAD(+)-binding positions include Ala115–Asn117 and Ser140. Asp145–Arg148 is a substrate binding site. Residues Arg150 and His165 each coordinate beta-D-fructose 1,6-bisphosphate. His172 acts as the Proton acceptor in catalysis. A substrate-binding site is contributed by Thr227.

It belongs to the LDH/MDH superfamily. LDH family. As to quaternary structure, homotetramer.

It is found in the cytoplasm. It catalyses the reaction (S)-lactate + NAD(+) = pyruvate + NADH + H(+). Its pathway is fermentation; pyruvate fermentation to lactate; (S)-lactate from pyruvate: step 1/1. Its activity is regulated as follows. Allosterically activated by fructose 1,6-bisphosphate (FBP). Catalyzes the conversion of lactate to pyruvate. This Allorhizobium ampelinum (strain ATCC BAA-846 / DSM 112012 / S4) (Agrobacterium vitis (strain S4)) protein is L-lactate dehydrogenase.